A 286-amino-acid chain; its full sequence is Elongation factor Ts (286 aa).

The segment at 82–85 (TDFV) is involved in Mg(2+) ion dislocation from EF-Tu.

Belongs to the EF-Ts family.

It is found in the cytoplasm. Associates with the EF-Tu.GDP complex and induces the exchange of GDP to GTP. It remains bound to the aminoacyl-tRNA.EF-Tu.GTP complex up to the GTP hydrolysis stage on the ribosome. The chain is Elongation factor Ts from Hamiltonella defensa subsp. Acyrthosiphon pisum (strain 5AT).